The sequence spans 538 residues: Atos homolog protein B (538 aa).

Disordered stretches follow at residues 1 to 99 (MRHV…PSTV), 165 to 185 (QGGQ…QLHT), and 199 to 270 (KSPV…GTLG). Positions 227–238 (HTPPGPGPPGPC) are enriched in pro residues. Phosphoserine occurs at positions 254 and 255. A required for macropage invasion region spans residues 348-430 (LLGNFEESLL…VPKVGTIQVT (83 aa)). A transactivation domain 1 (TAD1) region spans residues 436–444 (QTVVKMFLV).

The protein belongs to the ATOS family.

Its subcellular location is the nucleus. Functionally, transcription regulator that syncronizes transcriptional and translational programs to promote macrophage invasion of tissues. This chain is Atos homolog protein B, found in Mus musculus (Mouse).